Reading from the N-terminus, the 381-residue chain is MSNPSPQAPEEEASTSVCRPQSSMASVSRRHRRERRFRRYLSAGRLVRAQALLQRHPGLDVDAGQPPPLHRACARHDAPALCLLLRLGADPAHQDRHGDTALHAAARQGPNAYTDFFLPLLSRCPSAMGIKNKDGETPGQILGWGPPWDSAEEEEDEEVSKEREWRQKLQGELEDEWQEVIGRFEDDASRETQEPESFSAWSERLAREHAQKQRRQQLEAEGSRRPPRAEGSSHSWRQQEEEQRLFRERARVKEKELCESRARRAQEAQGDRGPAPPRARPRAEHPRGAGRGSLWRFGDVPWPCPGGGDPEAMAAALVARGPPLEEQGALKRYLRVQQVRWHPDRFLQRFRNQIETWELGRVMGAVTALSQALNRHAEALK.

Residues 1–32 (MSNPSPQAPEEEASTSVCRPQSSMASVSRRHR) are disordered. Residues 14–26 (STSVCRPQSSMAS) show a composition bias toward polar residues. 2 ANK repeats span residues 64–93 (GQPP…DPAH) and 97–133 (HGDT…IKNK). Disordered regions lie at residues 129–166 (GIKN…REWR), 186–242 (DDAS…QEEE), and 257–294 (LCES…RGSL). Position 150 is a phosphoserine (Ser-150). Residues 150–159 (SAEEEEDEEV) are compositionally biased toward acidic residues. Basic and acidic residues-rich tracts occupy residues 204–228 (RLAR…RPPR) and 257–270 (LCES…EAQG).

In terms of assembly, interacts with CACTIN (via N-terminal domain); the interaction occurs in a pro-inflammatory-independent manner.

It is found in the nucleus. Its function is as follows. Involved in the regulation of innate immune response. Acts as negative regulator of Toll-like receptor and interferon-regulatory factor (IRF) signaling pathways. Contributes to the negative regulation of transcriptional activation of NF-kappa-B target genes in response to endogenous pro-inflammatory stimuli. The protein is NF-kappa-B inhibitor-like protein 1 (Nfkbil1) of Rattus norvegicus (Rat).